The following is a 343-amino-acid chain: Holliday junction branch migration complex subunit RuvB (343 aa).

The large ATPase domain (RuvB-L) stretch occupies residues 4 to 193 (TDNLTAAQPQ…FGIVSRLEFY (190 aa)). ATP is bound by residues leucine 32, arginine 33, glycine 74, lysine 77, threonine 78, threonine 79, 140-142 (EDY), arginine 183, tyrosine 193, and arginine 230. Position 78 (threonine 78) interacts with Mg(2+). The small ATPAse domain (RuvB-S) stretch occupies residues 194 to 264 (ENRDLTTIVS…IADAALSMLD (71 aa)). Positions 267-343 (AQGLDVMDRK…YLHFGLPVEK (77 aa)) are head domain (RuvB-H). DNA contacts are provided by arginine 322 and arginine 327.

It belongs to the RuvB family. As to quaternary structure, homohexamer. Forms an RuvA(8)-RuvB(12)-Holliday junction (HJ) complex. HJ DNA is sandwiched between 2 RuvA tetramers; dsDNA enters through RuvA and exits via RuvB. An RuvB hexamer assembles on each DNA strand where it exits the tetramer. Each RuvB hexamer is contacted by two RuvA subunits (via domain III) on 2 adjacent RuvB subunits; this complex drives branch migration. In the full resolvosome a probable DNA-RuvA(4)-RuvB(12)-RuvC(2) complex forms which resolves the HJ.

The protein resides in the cytoplasm. It catalyses the reaction ATP + H2O = ADP + phosphate + H(+). The RuvA-RuvB-RuvC complex processes Holliday junction (HJ) DNA during genetic recombination and DNA repair, while the RuvA-RuvB complex plays an important role in the rescue of blocked DNA replication forks via replication fork reversal (RFR). RuvA specifically binds to HJ cruciform DNA, conferring on it an open structure. The RuvB hexamer acts as an ATP-dependent pump, pulling dsDNA into and through the RuvAB complex. RuvB forms 2 homohexamers on either side of HJ DNA bound by 1 or 2 RuvA tetramers; 4 subunits per hexamer contact DNA at a time. Coordinated motions by a converter formed by DNA-disengaged RuvB subunits stimulates ATP hydrolysis and nucleotide exchange. Immobilization of the converter enables RuvB to convert the ATP-contained energy into a lever motion, pulling 2 nucleotides of DNA out of the RuvA tetramer per ATP hydrolyzed, thus driving DNA branch migration. The RuvB motors rotate together with the DNA substrate, which together with the progressing nucleotide cycle form the mechanistic basis for DNA recombination by continuous HJ branch migration. Branch migration allows RuvC to scan DNA until it finds its consensus sequence, where it cleaves and resolves cruciform DNA. The sequence is that of Holliday junction branch migration complex subunit RuvB from Neisseria meningitidis serogroup C (strain 053442).